Consider the following 265-residue polypeptide: 3-methyl-2-oxobutanoate hydroxymethyltransferase (265 aa).

Mg(2+) contacts are provided by aspartate 43 and aspartate 82. Residues 43 to 44 (DS), aspartate 82, and lysine 111 each bind 3-methyl-2-oxobutanoate. Glutamate 113 is a Mg(2+) binding site. Residue glutamate 180 is the Proton acceptor of the active site.

Belongs to the PanB family. As to quaternary structure, homodecamer; pentamer of dimers. Mg(2+) is required as a cofactor.

The protein resides in the cytoplasm. It catalyses the reaction 3-methyl-2-oxobutanoate + (6R)-5,10-methylene-5,6,7,8-tetrahydrofolate + H2O = 2-dehydropantoate + (6S)-5,6,7,8-tetrahydrofolate. It functions in the pathway cofactor biosynthesis; (R)-pantothenate biosynthesis; (R)-pantoate from 3-methyl-2-oxobutanoate: step 1/2. Functionally, catalyzes the reversible reaction in which hydroxymethyl group from 5,10-methylenetetrahydrofolate is transferred onto alpha-ketoisovalerate to form ketopantoate. This chain is 3-methyl-2-oxobutanoate hydroxymethyltransferase, found in Francisella tularensis subsp. mediasiatica (strain FSC147).